The primary structure comprises 116 residues: NADPH-dependent 7-cyano-7-deazaguanine reductase (116 aa).

Cysteine 31 (thioimide intermediate) is an active-site residue. Aspartate 38 (proton donor) is an active-site residue. Substrate contacts are provided by residues 53-55 (VEL) and 72-73 (YE).

Belongs to the GTP cyclohydrolase I family. QueF type 1 subfamily.

Its subcellular location is the cytoplasm. It carries out the reaction 7-aminomethyl-7-carbaguanine + 2 NADP(+) = 7-cyano-7-deazaguanine + 2 NADPH + 3 H(+). Its pathway is tRNA modification; tRNA-queuosine biosynthesis. Functionally, catalyzes the NADPH-dependent reduction of 7-cyano-7-deazaguanine (preQ0) to 7-aminomethyl-7-deazaguanine (preQ1). This is NADPH-dependent 7-cyano-7-deazaguanine reductase from Chlorobium chlorochromatii (strain CaD3).